Here is a 430-residue protein sequence, read N- to C-terminus: Pyrroloquinoline quinone-dependent sugar dehydrogenase (430 aa).

The first 23 residues, 1–23 (MARLAPHTLLLALFVFLFGSCTA), serve as a signal peptide directing secretion. Asn-25 is a glycosylation site (N-linked (GlcNAc...) asparagine). Residue Arg-57 participates in pyrroloquinoline quinone binding. 2 N-linked (GlcNAc...) asparagine glycosylation sites follow: Asn-94 and Asn-147. Position 153 (His-153) interacts with pyrroloquinoline quinone. Asn-184 is a glycosylation site (N-linked (GlcNAc...) asparagine). Residue Arg-220 participates in pyrroloquinoline quinone binding. Ca(2+) is bound by residues Ser-240 and Asp-242. Cys-281 and Cys-316 are oxidised to a cystine. N-linked (GlcNAc...) asparagine glycosylation occurs at Asn-306. His-330 provides a ligand contact to pyrroloquinoline quinone. Asn-341 carries an N-linked (GlcNAc...) asparagine glycan. Position 350 (His-350) interacts with pyrroloquinoline quinone. Residues Cys-388 and Cys-392 are joined by a disulfide bond.

The protein belongs to the sugar dehydrogenase AA12 family. The cofactor is Ca(2+). Requires pyrroloquinoline quinone as cofactor.

The protein resides in the secreted. Its function is as follows. Pyrroloquinoline quinone (PPQ)-dependent oxidoreductase that catalyzes the oxidation of various sugars such as L-fucose. This chain is Pyrroloquinoline quinone-dependent sugar dehydrogenase, found in Hypocrea jecorina (strain QM6a) (Trichoderma reesei).